A 783-amino-acid polypeptide reads, in one-letter code: Type 4 coupling protein DotL (783 aa).

The chain crosses the membrane as a helical span at residues 47–67 (VSYYFSEAATFLLIMGGIFFL). The tract at residues 100-500 (NIARGITFFG…ICMKLEDPTE (401 aa)) is ATPase domain. The segment at 671–773 (VEGALTIFSK…SAKISAEREK (103 aa)) is interaction with IcmS/IcmW.

In terms of assembly, the T4BSS is a complex nanomachine composed of several subcomplexes. This subunit is part of the Type IV Coupling Complex (T4CC), a subcomplex composed of the DotLMNYZ core and the IcmSW-LvgA adapter subunits, linked by the C-terminal tail of DotL. Six DotLMNYZ hetero-pentameric units may assemble into a hexameric nanomachine, forming an inner membrane channel for effectors to pass through. Interacts directly with DotM. Interacts directly, via its C-terminal region, with the type IV adapter proteins IcmS and IcmW. Also interacts with DotN and LvgA via its C-terminal region.

Its subcellular location is the cell inner membrane. Component of the Dot/Icm type IVB secretion system (T4BSS), which is used to inject bacterial effector proteins into eukaryotic host cells. Part of a subcomplex which recruits effector proteins and delivers them to the core transmembrane subcomplex. Plays a central role in the assembly of the subcomplex. Required for the recruitment of IcmS and IcmW to the inner membrane and for the translocation of adapter-dependent substrates. May have ATPase activity. This Legionella pneumophila subsp. pneumophila (strain Philadelphia 1 / ATCC 33152 / DSM 7513) protein is Type 4 coupling protein DotL.